We begin with the raw amino-acid sequence, 93 residues long: Bombyxin B-11 (93 aa).

Residues 1–22 (MMKTAVMFILVVVISLTYSSEE) form the signal peptide. Intrachain disulfides connect Cys30–Cys75, Cys42–Cys92, and Cys74–Cys79. The propeptide at 49 to 64 (GGAQYAPYWQETYLRS) is bombyxin B-11 C peptide.

Belongs to the insulin family. In terms of assembly, heterodimer of a B chain and an A chain linked by two disulfide bonds.

It is found in the secreted. Functionally, brain peptide responsible for activation of prothoracic glands to produce ecdysone in insects. This is Bombyxin B-11 (BBXB11) from Bombyx mori (Silk moth).